Consider the following 147-residue polypeptide: Peptide deformylase (147 aa).

Fe cation-binding residues include Cys88 and His130. The active site involves Glu131. His134 contacts Fe cation.

Belongs to the polypeptide deformylase family. The cofactor is Fe(2+).

The catalysed reaction is N-terminal N-formyl-L-methionyl-[peptide] + H2O = N-terminal L-methionyl-[peptide] + formate. Removes the formyl group from the N-terminal Met of newly synthesized proteins. Requires at least a dipeptide for an efficient rate of reaction. N-terminal L-methionine is a prerequisite for activity but the enzyme has broad specificity at other positions. The polypeptide is Peptide deformylase (Alkaliphilus metalliredigens (strain QYMF)).